Consider the following 1338-residue polypeptide: Aldehyde oxidase (1338 aa).

Residues 5–92 (SELLFYVNGR…GAAVTTVEGI (88 aa)) form the 2Fe-2S ferredoxin-type domain. [2Fe-2S] cluster contacts are provided by Cys44, Cys49, Cys52, and Cys74. Gln113 contacts Mo-molybdopterin. Cys114, Cys117, Cys149, and Cys151 together coordinate [2Fe-2S] cluster. Cys151 lines the Mo-molybdopterin pocket. The region spanning 236 to 421 (FGSERMMWFS…VSVNIPYSRK (186 aa)) is the FAD-binding PCMH-type domain. FAD-binding positions include 264-271 (VIMGNTSV), Ala345, Ser354, His358, Asp367, and Leu411. Mo-molybdopterin is bound by residues 806-807 (AF) and Met1047. Ser1068 bears the Phosphoserine mark. Residues 1088–1091 (GSVV), Gln1203, and Leu1268 contribute to the Mo-molybdopterin site. Glu1270 (proton acceptor; for azaheterocycle hydroxylase activity) is an active-site residue.

It belongs to the xanthine dehydrogenase family. Homodimer. It depends on [2Fe-2S] cluster as a cofactor. The cofactor is FAD. Mo-molybdopterin serves as cofactor. Abundant in liver, expressed in adipose tissue and at lower levels in lung, skeletal muscle, pancreas. In contrast to mice, no significant gender difference in AOX1 expression level (at protein level).

The protein resides in the cytoplasm. It catalyses the reaction an aldehyde + O2 + H2O = a carboxylate + H2O2 + H(+). It carries out the reaction retinal + O2 + H2O = retinoate + H2O2 + H(+). Is very potently inhibited by raloxifene. Also inhibited by estradiol, ethinyl estradiol, hydralazine, menadione, isovanillin and thioridazine. Not inhibited by allopurinol, a xanthine dehydrogenase potent inhibitor. In terms of biological role, oxidase with broad substrate specificity, oxidizing aromatic azaheterocycles, such as N1-methylnicotinamide, N-methylphthalazinium and phthalazine, as well as aldehydes, such as benzaldehyde, retinal, pyridoxal, and vanillin. Plays a key role in the metabolism of xenobiotics and drugs containing aromatic azaheterocyclic substituents. Participates in the bioactivation of prodrugs such as famciclovir, catalyzing the oxidation step from 6-deoxypenciclovir to penciclovir, which is a potent antiviral agent. Is probably involved in the regulation of reactive oxygen species homeostasis. May be a prominent source of superoxide generation via the one-electron reduction of molecular oxygen. May also catalyze nitric oxide (NO) production via the reduction of nitrite to NO with NADH or aldehyde as electron donor. May play a role in adipogenesis. This is Aldehyde oxidase from Homo sapiens (Human).